Here is a 451-residue protein sequence, read N- to C-terminus: NADH-quinone oxidoreductase subunit D (451 aa).

The protein belongs to the complex I 49 kDa subunit family. In terms of assembly, NDH-1 is composed of 14 different subunits. Subunits NuoB, C, D, E, F, and G constitute the peripheral sector of the complex.

It localises to the cell inner membrane. It carries out the reaction a quinone + NADH + 5 H(+)(in) = a quinol + NAD(+) + 4 H(+)(out). NDH-1 shuttles electrons from NADH, via FMN and iron-sulfur (Fe-S) centers, to quinones in the respiratory chain. The immediate electron acceptor for the enzyme in this species is believed to be a menaquinone. Couples the redox reaction to proton translocation (for every two electrons transferred, four hydrogen ions are translocated across the cytoplasmic membrane), and thus conserves the redox energy in a proton gradient. This is NADH-quinone oxidoreductase subunit D from Salinibacter ruber (strain DSM 13855 / M31).